Reading from the N-terminus, the 200-residue chain is NADH-quinone oxidoreductase subunit B (200 aa).

[4Fe-4S] cluster contacts are provided by Cys78, Cys79, Cys144, and Cys174.

Belongs to the complex I 20 kDa subunit family. As to quaternary structure, NDH-1 is composed of 14 different subunits. Subunits NuoB, C, D, E, F, and G constitute the peripheral sector of the complex. It depends on [4Fe-4S] cluster as a cofactor.

The protein localises to the cell membrane. The catalysed reaction is a quinone + NADH + 5 H(+)(in) = a quinol + NAD(+) + 4 H(+)(out). In terms of biological role, NDH-1 shuttles electrons from NADH, via FMN and iron-sulfur (Fe-S) centers, to quinones in the respiratory chain. The immediate electron acceptor for the enzyme in this species is believed to be ubiquinone. Couples the redox reaction to proton translocation (for every two electrons transferred, four hydrogen ions are translocated across the cytoplasmic membrane), and thus conserves the redox energy in a proton gradient. The protein is NADH-quinone oxidoreductase subunit B of Dehalococcoides mccartyi (strain CBDB1).